Here is a 445-residue protein sequence, read N- to C-terminus: Probable multidrug resistance protein YpnP (445 aa).

12 helical membrane passes run 15–35 (LVLF…FQFI), 49–69 (LGAA…ILGL), 95–115 (AFVV…FFLS), 136–156 (LQIQ…STVL), 168–188 (FIAF…SVFR), 194–214 (AAYS…FYVI), 240–260 (IPAG…MSVV), 277–297 (LDSI…SMAG), 314–334 (LGVI…WVFG), 355–375 (LKWI…NGIV), 384–404 (VLVL…ALFS), and 411–431 (GIGL…FLYY).

Belongs to the multi antimicrobial extrusion (MATE) (TC 2.A.66.1) family.

The protein localises to the cell membrane. This is Probable multidrug resistance protein YpnP (ypnP) from Bacillus subtilis (strain 168).